Reading from the N-terminus, the 462-residue chain is ATP synthase subunit beta (462 aa).

151-158 (GGAGVGKT) is an ATP binding site.

It belongs to the ATPase alpha/beta chains family. As to quaternary structure, F-type ATPases have 2 components, CF(1) - the catalytic core - and CF(0) - the membrane proton channel. CF(1) has five subunits: alpha(3), beta(3), gamma(1), delta(1), epsilon(1). CF(0) has four main subunits: a(1), b(1), b'(1) and c(9-12).

It is found in the cell inner membrane. It carries out the reaction ATP + H2O + 4 H(+)(in) = ADP + phosphate + 5 H(+)(out). Produces ATP from ADP in the presence of a proton gradient across the membrane. The catalytic sites are hosted primarily by the beta subunits. This chain is ATP synthase subunit beta, found in Chlorobium limicola (strain DSM 245 / NBRC 103803 / 6330).